A 172-amino-acid chain; its full sequence is WW domain binding protein VOPP1 (172 aa).

An N-terminal signal peptide occupies residues 1–22 (MRRQPAKVAALLLGLLLECTEA). The Extracellular segment spans residues 23–60 (KKHCWYFEGLYPTYYICRSYEDCCGSRCCVRALSIQRL). Residues 61-81 (WYFWFLLMMGVLFCCGAGFFI) form a helical membrane-spanning segment. The Cytoplasmic segment spans residues 82-172 (RRRMYPPPLI…PPYEQVVKAK (91 aa)). The disordered stretch occupies residues 102–153 (RQPPNPGPGAQQPGPPYYTDPGGPGMNPVGNSMAMAFQVPPNSPQGSVACPP). Positions 104–119 (PPNPGPGAQQPGPPYY) are enriched in pro residues.

Belongs to the VOPP1/ECOP family. In terms of assembly, interacts with WWOX (via WW domain). As to expression, widely expressed with highest levels in thymus and ovary.

The protein resides in the cytoplasmic vesicle membrane. The protein localises to the late endosome membrane. It is found in the lysosome membrane. Functionally, increases the transcriptional activity of NFKB1 by facilitating its nuclear translocation, DNA-binding and associated apoptotic response, when overexpressed. May sequester WWOX in lysosomal vesicles and thereby regulate WWOX role as tumor suppressor. The sequence is that of WW domain binding protein VOPP1 from Homo sapiens (Human).